A 559-amino-acid chain; its full sequence is Protein pp71 (559 aa).

Position 218 is an S-nitrosocysteine; by host (C218). T223 carries the post-translational modification Phosphothreonine. 2 disordered regions span residues 404–440 (EFLPQSPGLPPTEEEEEEEEEDDEDDLSSTPTPTPLS) and 530–559 (SSTLRSVPAPRPSPISTASTSSTPRSRPRI). Acidic residues predominate over residues 415–430 (TEEEEEEEEEDDEDDL). Composition is skewed to low complexity over residues 431–440 (SSTPTPTPLS) and 543–559 (PISTASTSSTPRSRPRI).

Belongs to the herpesviridae pp71 family. In terms of assembly, interacts with the host protein DAXX; this interaction takes place at ND10 and induces the reversal of DAXX-mediated repression of viral transcription. Interacts with UL35. Interacts with host TMEM173/STING1; this interaction inhibits the cGAS/STING pathway. Interacts with host RB1; this interaction mediates RB1 proteasomal degradation. S-nitrosylation limits ability to undermine the cGAS/STING antiviral pathway.

It localises to the virion tegument. The protein resides in the host nucleus. It is found in the host endoplasmic reticulum. Functionally, stimulates viral immediate-early (IE) transcription. Plays a role in the inhibition of the host innate repsonse by targeting STING1 and thus the cGAS-STING pathway. Also counteracts host DAXX-mediated repression of viral transcription. Displaces a DAXX-binding protein, ATRX, from nuclear domain 10 sites (ND10) shortly after infection. Increases the basal level of SUMOylated DAXX in infected cells. Stimulates quiescent cells to re-enter the cell cycle, proceed through G1 and enter the S phase. Interacts with hypophosphorylated forms of RB1 and induces their degradation by the proteasome without involving ubiquitin conjugation. The chain is Protein pp71 (UL82) from Homo sapiens (Human).